We begin with the raw amino-acid sequence, 217 residues long: RNA chaperone ProQ (217 aa).

The segment at 105–166 (EAKARVQAQR…PREEQHTPVS (62 aa)) is disordered. Over residues 121-131 (KRERKPRPTTP) the composition is skewed to basic residues. The span at 132–162 (RRKEGAERKPRAQKPVEKAPKTVKAPREEQH) shows a compositional bias: basic and acidic residues.

This sequence belongs to the ProQ family.

It localises to the cytoplasm. Its function is as follows. RNA chaperone with significant RNA binding, RNA strand exchange and RNA duplexing activities. May regulate ProP activity through an RNA-based, post-transcriptional mechanism. The sequence is that of RNA chaperone ProQ from Escherichia coli O8 (strain IAI1).